The sequence spans 894 residues: Nitrate reductase [NADPH] (894 aa).

Positions 1–79 (MAVKSQLGVT…PEDLKTPDHR (79 aa)) are disordered. Polar residues predominate over residues 7 to 16 (LGVTYTTKTF). Basic and acidic residues predominate over residues 69 to 79 (LPEDLKTPDHR). Cys169 provides a ligand contact to Mo-molybdopterin. Residues 535–610 (VRIISLEELK…MPQYHIGTLN (76 aa)) form the Cytochrome b5 heme-binding domain. Heme-binding residues include His570 and His593. In terms of domain architecture, FAD-binding FR-type spans 638–749 (KYWSKAILET…KGPVGKFEYL (112 aa)). Residues 692–695 (RAYT), 709–713 (LIKIY), 723–725 (KMT), Ser773, and Thr776 each bind FAD.

It belongs to the nitrate reductase family. Homodimer. FAD serves as cofactor. Requires heme as cofactor. The cofactor is Mo-molybdopterin.

It carries out the reaction nitrite + NADP(+) + H2O = nitrate + NADPH + H(+). Nitrate reductase is a key enzyme involved in the first step of nitrate assimilation in plants, fungi and bacteria. In Beauveria bassiana (White muscardine disease fungus), this protein is Nitrate reductase [NADPH] (NIA).